The sequence spans 277 residues: Large ribosomal subunit protein uL2 (277 aa).

Residues 199-277 are disordered; sequence DHMNTSIGKA…ILLSRHKRKK (79 aa). A compositionally biased stretch (basic residues) spans 209 to 220; it reads GRNRWLGRKPHN.

This sequence belongs to the universal ribosomal protein uL2 family. Part of the 50S ribosomal subunit. Forms a bridge to the 30S subunit in the 70S ribosome.

Functionally, one of the primary rRNA binding proteins. Required for association of the 30S and 50S subunits to form the 70S ribosome, for tRNA binding and peptide bond formation. It has been suggested to have peptidyltransferase activity; this is somewhat controversial. Makes several contacts with the 16S rRNA in the 70S ribosome. The protein is Large ribosomal subunit protein uL2 of Bradyrhizobium diazoefficiens (strain JCM 10833 / BCRC 13528 / IAM 13628 / NBRC 14792 / USDA 110).